We begin with the raw amino-acid sequence, 238 residues long: Probable transcriptional regulatory protein YeeN (238 aa).

This sequence belongs to the TACO1 family. YeeN subfamily.

The protein localises to the cytoplasm. This chain is Probable transcriptional regulatory protein YeeN, found in Escherichia coli O157:H7.